Consider the following 311-residue polypeptide: Putative dihydroorotate dehydrogenase A (fumarate) (311 aa).

Substrate-binding positions include Lys-45, Asn-69–Leu-73, and Asn-128. An FMN-binding site is contributed by Lys-45 to Thr-46. Asn-128 contributes to the FMN binding site. Cys-131 functions as the Nucleophile in the catalytic mechanism. Residues Lys-165 and Val-193 each coordinate FMN. Residue Asn-194–Ser-195 participates in substrate binding. Residues Gly-220, Gly-248 to Gly-249, and Gly-270 to Thr-271 each bind FMN.

This sequence belongs to the dihydroorotate dehydrogenase family. Type 1 subfamily. As to quaternary structure, homodimer. The cofactor is FMN.

The protein resides in the cytoplasm. It catalyses the reaction (S)-dihydroorotate + fumarate = orotate + succinate. It participates in pyrimidine metabolism; UMP biosynthesis via de novo pathway. In terms of biological role, catalyzes the conversion of dihydroorotate to orotate with fumarate as the electron acceptor. This is Putative dihydroorotate dehydrogenase A (fumarate) (pyrD) from Streptococcus uberis (strain ATCC BAA-854 / 0140J).